Here is a 132-residue protein sequence, read N- to C-terminus: Nuclear transition protein 2 (132 aa).

Residues 1–20 (MDTKTQSLPNTHAQPHSNSR) show a composition bias toward polar residues. Residues 1-132 (MDTKTQSLPN…KRQSSGRKYN (132 aa)) are disordered. Residues histidine 12, histidine 16, histidine 24, cysteine 29, cysteine 31, and cysteine 35 each coordinate Zn(2+). Residues 37 to 59 (SRSRSRSCRSRSSSRRPRSHRSP) are compositionally biased toward basic residues. The segment covering 82–94 (SHQCPSRPVTHSC) has biased composition (polar residues). Positions 105–113 (GKVIKRKQV) match the Nuclear localization signal motif. Residues 108 to 132 (IKRKQVKRSKQVYKRKRQSSGRKYN) are compositionally biased toward basic residues. Serine 127 bears the Phosphoserine mark.

It belongs to the nuclear transition protein 2 family. As to expression, testis.

The protein resides in the nucleus. It localises to the nucleolus. It is found in the chromosome. In terms of biological role, plays a key role in the replacement of histones to protamine in the elongating spermatids of mammals. In condensing spermatids, loaded onto the nucleosomes, where it promotes the recruitment and processing of protamines, which are responsible for histone eviction. This chain is Nuclear transition protein 2 (TNP2), found in Bos taurus (Bovine).